The chain runs to 190 residues: Segregation and condensation protein B (190 aa).

This sequence belongs to the ScpB family. Homodimer. Homodimerization may be required to stabilize the binding of ScpA to the Smc head domains. Component of a cohesin-like complex composed of ScpA, ScpB and the Smc homodimer, in which ScpA and ScpB bind to the head domain of Smc. The presence of the three proteins is required for the association of the complex with DNA.

The protein resides in the cytoplasm. Its function is as follows. Participates in chromosomal partition during cell division. May act via the formation of a condensin-like complex containing Smc and ScpA that pull DNA away from mid-cell into both cell halves. The chain is Segregation and condensation protein B from Alkaliphilus metalliredigens (strain QYMF).